The following is a 275-amino-acid chain: AA9 family lytic polysaccharide monooxygenase AA9-X282 (275 aa).

A signal peptide spans 1–17 (MFTKLIIAASLAASVAA). His18 lines the Cu(2+) pocket. Phosphothreonine is present on Thr20. Phosphoserine occurs at positions 43 and 49. Thr50 bears the Phosphothreonine mark. The residue at position 58 (Ser58) is a Phosphoserine. A disulfide bridge connects residues Cys66 and Cys185. His96 provides a ligand contact to Cu(2+). A Phosphoserine modification is found at Ser130. 2 residues coordinate O2: His171 and Gln180. Tyr182 contacts Cu(2+). The interval 236–265 (TSPAVANTPYPTTATWNTALQPSTVPTAVP) is X282 extension. A 9res motif motif is present at residues 268-275 (GTPGIGKA).

Belongs to the polysaccharide monooxygenase AA9 family. Requires Cu(2+) as cofactor.

Its subcellular location is the secreted. It carries out the reaction [(1-&gt;4)-beta-D-glucosyl]n+m + reduced acceptor + O2 = 4-dehydro-beta-D-glucosyl-[(1-&gt;4)-beta-D-glucosyl]n-1 + [(1-&gt;4)-beta-D-glucosyl]m + acceptor + H2O.. Lytic polysaccharide monooxygenase (LPMO) that depolymerizes crystalline and amorphous polysaccharides via the oxidation of scissile alpha- or beta-(1-4)-glycosidic bonds, yielding C1 oxidation products. Catalysis by LPMOs requires the reduction of the active-site copper from Cu(II) to Cu(I) by a reducing agent and H(2)O(2) or O(2) as a cosubstrate. Shows only weak binding properties to cellulose, and low cellulolytic oxidative activity which questions the involvement of X282 extension-containing AA9 proteins in the degradation of plant cell wall and opens new avenues as to the divergence of function of some AA9 members. The polypeptide is AA9 family lytic polysaccharide monooxygenase AA9-X282 (Trametes coccinea (strain BRFM310) (Pycnoporus coccineus)).